Consider the following 462-residue polypeptide: Bifunctional protein GlmU (462 aa).

A pyrophosphorylase region spans residues 1 to 239; sequence MTESVSKPVR…EASVQGVNAQ (239 aa). UDP-N-acetyl-alpha-D-glucosamine contacts are provided by residues 17 to 20, Lys31, Gln84, and 89 to 90; these read LAAG and GT. Mg(2+) is bound at residue Asp114. UDP-N-acetyl-alpha-D-glucosamine is bound by residues Gly150, Glu165, Asn180, and Asn237. Asn237 serves as a coordination point for Mg(2+). The segment at 240-260 is linker; sequence AELAAAEAVWQQNRRKALMVD. The tract at residues 261–462 is N-acetyltransferase; sequence GVTMPAPDTV…QKDKKKDKKA (202 aa). Residues Arg326 and Lys344 each coordinate UDP-N-acetyl-alpha-D-glucosamine. His356 acts as the Proton acceptor in catalysis. 2 residues coordinate UDP-N-acetyl-alpha-D-glucosamine: Tyr359 and Asn370. Acetyl-CoA-binding positions include Ala373, 379-380, Ser398, Ser416, and Arg433; that span reads NY.

The protein in the N-terminal section; belongs to the N-acetylglucosamine-1-phosphate uridyltransferase family. It in the C-terminal section; belongs to the transferase hexapeptide repeat family. In terms of assembly, homotrimer. It depends on Mg(2+) as a cofactor.

The protein resides in the cytoplasm. It carries out the reaction alpha-D-glucosamine 1-phosphate + acetyl-CoA = N-acetyl-alpha-D-glucosamine 1-phosphate + CoA + H(+). The enzyme catalyses N-acetyl-alpha-D-glucosamine 1-phosphate + UTP + H(+) = UDP-N-acetyl-alpha-D-glucosamine + diphosphate. Its pathway is nucleotide-sugar biosynthesis; UDP-N-acetyl-alpha-D-glucosamine biosynthesis; N-acetyl-alpha-D-glucosamine 1-phosphate from alpha-D-glucosamine 6-phosphate (route II): step 2/2. It participates in nucleotide-sugar biosynthesis; UDP-N-acetyl-alpha-D-glucosamine biosynthesis; UDP-N-acetyl-alpha-D-glucosamine from N-acetyl-alpha-D-glucosamine 1-phosphate: step 1/1. The protein operates within bacterial outer membrane biogenesis; LPS lipid A biosynthesis. Functionally, catalyzes the last two sequential reactions in the de novo biosynthetic pathway for UDP-N-acetylglucosamine (UDP-GlcNAc). The C-terminal domain catalyzes the transfer of acetyl group from acetyl coenzyme A to glucosamine-1-phosphate (GlcN-1-P) to produce N-acetylglucosamine-1-phosphate (GlcNAc-1-P), which is converted into UDP-GlcNAc by the transfer of uridine 5-monophosphate (from uridine 5-triphosphate), a reaction catalyzed by the N-terminal domain. The sequence is that of Bifunctional protein GlmU from Caulobacter vibrioides (strain ATCC 19089 / CIP 103742 / CB 15) (Caulobacter crescentus).